We begin with the raw amino-acid sequence, 419 residues long: eIF5-mimic protein 2-A (419 aa).

Over residues 1–15 the composition is skewed to polar residues; sequence MNNQKQQKPTLTGQR. The disordered stretch occupies residues 1 to 29; that stretch reads MNNQKQQKPTLTGQRFKTRKRDEKERFDP. The W2 domain occupies 247-414; sequence NQQSIGARKE…KNAEEESESE (168 aa).

Belongs to the BZW family.

In terms of biological role, translation initiation regulator which may repress repeat-associated non-AUG (RAN) initiated translation probably by acting as a competitive inhibitor of eukaryotic translation initiation factor 5 (EIF5) function. Enhances histone H4 gene transcription but does not seem to bind DNA directly. The chain is eIF5-mimic protein 2-A (bzw1a) from Danio rerio (Zebrafish).